We begin with the raw amino-acid sequence, 325 residues long: MANFIEKITYLGTPAIKAGNEHLEMIVVPEWGSNVISLVDKTTNVQLLREPETAESFHDTPTLYGIPILFPPNRISDGTFSFRGRTYHFDINEKDKHNHLHGFLYHEKWNVVTTKQTDEGVIVETEIDLSELPHVQKQFPHHAVVRMTYTIKENTLFKHATVMNKGKEAFPWGIGYHTTFIFPAESSLFSLTADQQWELDERLLPTGKLMDVPYKEALHEGMDLRHKQLDDVFLSSYQKRGGENQAVIYHQHAHISIIYKADEQFKHWVVYNADGKQGYLCPEPYTWVTNAVNLDLPSSLTGLQVLEPGEETTAKSSITIELNHQ.

73–74 provides a ligand contact to substrate; that stretch reads NR. H177 serves as the catalytic Proton donor. D230 is a substrate binding site. E283 functions as the Proton acceptor in the catalytic mechanism.

This sequence belongs to the aldose epimerase family.

It catalyses the reaction alpha-D-glucose = beta-D-glucose. The protein operates within carbohydrate metabolism; hexose metabolism. The protein is Aldose 1-epimerase (galM) of Bacillus subtilis (strain 168).